We begin with the raw amino-acid sequence, 472 residues long: PEP-dependent dihydroxyacetone kinase, phosphoryl donor subunit DhaM (472 aa).

Residues 1 to 135 (MVNLVIVSHS…NALEAKRVQL (135 aa)) enclose the PTS EIIA type-4 domain. Residue histidine 9 is the Tele-phosphohistidine intermediate of the active site. Residues 156–243 (ARSVSVVIQN…ALAAENFGEP (88 aa)) form the HPr domain. Histidine 170 serves as the catalytic Pros-phosphohistidine intermediate. Residues 266-472 (PQPQDRISRE…DIPGKRVIRG (207 aa)) are PTS EI-like, N-terminal part. The active-site Tele-phosphohistidine intermediate is the histidine 432.

This sequence belongs to the PEP-utilizing enzyme family. Homodimer. The dihydroxyacetone kinase complex is composed of a homodimer of DhaM, a homodimer of DhaK and the subunit DhaL.

The enzyme catalyses dihydroxyacetone + phosphoenolpyruvate = dihydroxyacetone phosphate + pyruvate. Component of the dihydroxyacetone kinase complex, which is responsible for the phosphoenolpyruvate (PEP)-dependent phosphorylation of dihydroxyacetone. DhaM serves as the phosphoryl donor. Is phosphorylated by phosphoenolpyruvate in an EI- and HPr-dependent reaction, and a phosphorelay system on histidine residues finally leads to phosphoryl transfer to DhaL and dihydroxyacetone. This Klebsiella michiganensis (strain ATCC 8724 / DSM 4798 / JCM 20051 / NBRC 3318 / NRRL B-199 / KCTC 1686 / BUCSAV 143 / CCM 1901) protein is PEP-dependent dihydroxyacetone kinase, phosphoryl donor subunit DhaM.